Reading from the N-terminus, the 214-residue chain is Small ribosomal subunit protein uS5 (214 aa).

An S5 DRBM domain is found at 54 to 117; that stretch reads LRYDIVDIGI…RDAKMRIIPV (64 aa).

It belongs to the universal ribosomal protein uS5 family. Part of the 30S ribosomal subunit. Contacts protein S4.

Functionally, with S4 and S12 plays an important role in translational accuracy. This chain is Small ribosomal subunit protein uS5, found in Sulfolobus acidocaldarius (strain ATCC 33909 / DSM 639 / JCM 8929 / NBRC 15157 / NCIMB 11770).